Reading from the N-terminus, the 458-residue chain is UDP-N-acetylmuramoylalanine--D-glutamate ligase (458 aa).

ATP is bound at residue 124-130; the sequence is GSDGKTT.

It belongs to the MurCDEF family.

It localises to the cytoplasm. It carries out the reaction UDP-N-acetyl-alpha-D-muramoyl-L-alanine + D-glutamate + ATP = UDP-N-acetyl-alpha-D-muramoyl-L-alanyl-D-glutamate + ADP + phosphate + H(+). The protein operates within cell wall biogenesis; peptidoglycan biosynthesis. Functionally, cell wall formation. Catalyzes the addition of glutamate to the nucleotide precursor UDP-N-acetylmuramoyl-L-alanine (UMA). The protein is UDP-N-acetylmuramoylalanine--D-glutamate ligase of Clostridium tetani (strain Massachusetts / E88).